Here is a 288-residue protein sequence, read N- to C-terminus: ATP synthase gamma chain (288 aa).

It belongs to the ATPase gamma chain family. F-type ATPases have 2 components, CF(1) - the catalytic core - and CF(0) - the membrane proton channel. CF(1) has five subunits: alpha(3), beta(3), gamma(1), delta(1), epsilon(1). CF(0) has three main subunits: a, b and c.

Its subcellular location is the cell inner membrane. In terms of biological role, produces ATP from ADP in the presence of a proton gradient across the membrane. The gamma chain is believed to be important in regulating ATPase activity and the flow of protons through the CF(0) complex. The polypeptide is ATP synthase gamma chain (Actinobacillus pleuropneumoniae serotype 5b (strain L20)).